A 619-amino-acid polypeptide reads, in one-letter code: Lateral signaling target protein 2 homolog (619 aa).

The segment at 501–561 adopts an FYVE-type zinc-finger fold; it reads DSDCEQCTAC…VCNLCFLYKI (61 aa). Zn(2+) is bound by residues cysteine 507, cysteine 510, cysteine 523, cysteine 526, cysteine 531, cysteine 534, cysteine 553, and cysteine 556. A disordered region spans residues 598–619; the sequence is HERSQDGSQSNESPTATTATTI. The segment covering 603–619 has biased composition (polar residues); that stretch reads DGSQSNESPTATTATTI.

This sequence belongs to the lst-2 family.

In terms of biological role, negative regulator of epidermal growth factor receptor (EGFR) signaling. In Brugia malayi (Filarial nematode worm), this protein is Lateral signaling target protein 2 homolog.